The primary structure comprises 369 residues: MSPIPERAKLHIAMVVFQTGYAGNHVIMRYALNLGVSKLVFPLYRTIVAFSVLAPSAYFLEKKERPAMKISFLIQFFLLGLVGITLNQGFYIFGLDNTSPTFASATENVVPAVSFLMAALLGIEKVEWKRKDGIAKVVGTIVSVAGSLVITLYKGPTIYQPSLNIVNQTIKPEEAEEENKNWTLGCLCLMGHCLCWSSWIVLQSPLLKKYPARFSFVSYSCFFAVIQFFGISAYFERDLERWKIISGGELYALLYTGLVGSAMVFAIQIYVVERGGPLFVSAYLPLQTLIAAVLATLALGEHFYLGGLIGAILIMSGLYLVVMGKSWENQALCQQQQHMISSAASDFGDEEDYHNNKPRSPISQPLISS.

Transmembrane regions (helical) follow at residues 12–31 (IAMVVFQTGYAGNHVIMRYA), 39–59 (LVFPLYRTIVAFSVLAPSAYF), 72–92 (FLIQFFLLGLVGITLNQGFYI), 103–123 (ASATENVVPAVSFLMAALLGI), 133–153 (GIAKVVGTIVSVAGSLVITLY), 182–202 (WTLGCLCLMGHCLCWSSWIVL), 214–234 (FSFVSYSCFFAVIQFFGISAY), 252–272 (ALLYTGLVGSAMVFAIQIYVV), 278–298 (LFVSAYLPLQTLIAAVLATLA), and 303–323 (FYLGGLIGAILIMSGLYLVVM). EamA domains are found at residues 24-150 (NHVI…SLVI) and 194-323 (LCWS…LVVM). Residues 348-369 (GDEEDYHNNKPRSPISQPLISS) are disordered.

The protein belongs to the drug/metabolite transporter (DMT) superfamily. Plant drug/metabolite exporter (P-DME) (TC 2.A.7.4) family.

The protein localises to the membrane. This Arabidopsis thaliana (Mouse-ear cress) protein is WAT1-related protein At3g53210.